The primary structure comprises 209 residues: Transcription factor atf31 (209 aa).

Residues 90–103 (SKSPSIISEASHNS) are compositionally biased toward polar residues. A disordered region spans residues 90–133 (SKSPSIISEASHNSPSRELDDSGDENTSKLTGTKQSMLKARNRQ). The bZIP domain occupies 121 to 184 (GTKQSMLKAR…IKLRTLVFAH (64 aa)). The tract at residues 123–161 (KQSMLKARNRQAAQKCRIKKKKYLQTLQDQVNYYTSENK) is basic motif. The leucine-zipper stretch occupies residues 163–177 (LLQSANDLREEIIKL).

This sequence belongs to the bZIP family.

The protein localises to the nucleus. This is Transcription factor atf31 (atf31) from Schizosaccharomyces pombe (strain 972 / ATCC 24843) (Fission yeast).